Consider the following 53-residue polypeptide: Light-harvesting protein B-808/866 beta chain (53 aa).

Met-1 bears the N-formylmethionine mark. Topologically, residues 1 to 25 (MRDDDDLVPPKWRPLFNNQDWLLHD) are cytoplasmic. A bacteriochlorophyll is bound by residues His-24 and His-42. The helical transmembrane segment at 26–48 (IVVKSFYGFGVIAAIAHLLVYLW) threads the bilayer. The Periplasmic segment spans residues 49-53 (KPWLP).

Belongs to the antenna complex beta subunit family. In terms of assembly, the core complex is formed by different alpha and beta chains, binding bacteriochlorophyll molecules, and arranged most probably in tetrameric structures disposed around the reaction center. The non-pigmented gamma chains may constitute additional components.

It is found in the cell membrane. In terms of biological role, antenna complexes are light-harvesting systems, which transfer the excitation energy to the reaction centers. The chain is Light-harvesting protein B-808/866 beta chain (puf2B) from Chloroflexus aurantiacus (strain ATCC 29366 / DSM 635 / J-10-fl).